The sequence spans 186 residues: Threonylcarbamoyl-AMP synthase (186 aa).

Residues 2–186 (VSNLQQVVKA…ARTEQLLRQG (185 aa)) form the YrdC-like domain.

It belongs to the SUA5 family. TsaC subfamily.

It is found in the cytoplasm. The enzyme catalyses L-threonine + hydrogencarbonate + ATP = L-threonylcarbamoyladenylate + diphosphate + H2O. Functionally, required for the formation of a threonylcarbamoyl group on adenosine at position 37 (t(6)A37) in tRNAs that read codons beginning with adenine. Catalyzes the conversion of L-threonine, HCO(3)(-)/CO(2) and ATP to give threonylcarbamoyl-AMP (TC-AMP) as the acyladenylate intermediate, with the release of diphosphate. This chain is Threonylcarbamoyl-AMP synthase, found in Vibrio vulnificus (strain CMCP6).